A 293-amino-acid polypeptide reads, in one-letter code: tRNA pseudouridine synthase B (293 aa).

D39 acts as the Nucleophile in catalysis.

This sequence belongs to the pseudouridine synthase TruB family. Type 1 subfamily.

The enzyme catalyses uridine(55) in tRNA = pseudouridine(55) in tRNA. Functionally, responsible for synthesis of pseudouridine from uracil-55 in the psi GC loop of transfer RNAs. The polypeptide is tRNA pseudouridine synthase B (Rickettsia bellii (strain OSU 85-389)).